Consider the following 23-residue polypeptide: Septenin 2b (23 aa).

Expressed in skin glands.

The protein resides in the secreted. Functionally, may act as an antimicrobial peptide. The sequence is that of Septenin 2b from Osteopilus septentrionalis (Cuban treefrog).